Consider the following 241-residue polypeptide: Proteasome subunit alpha (241 aa).

The protein belongs to the peptidase T1A family. In terms of assembly, the 20S proteasome core is composed of 14 alpha and 14 beta subunits that assemble into four stacked heptameric rings, resulting in a barrel-shaped structure. The two inner rings, each composed of seven catalytic beta subunits, are sandwiched by two outer rings, each composed of seven alpha subunits. The catalytic chamber with the active sites is on the inside of the barrel. Has a gated structure, the ends of the cylinder being occluded by the N-termini of the alpha-subunits. Is capped by the proteasome-associated ATPase, ARC.

Its subcellular location is the cytoplasm. It functions in the pathway protein degradation; proteasomal Pup-dependent pathway. Its activity is regulated as follows. The formation of the proteasomal ATPase ARC-20S proteasome complex, likely via the docking of the C-termini of ARC into the intersubunit pockets in the alpha-rings, may trigger opening of the gate for substrate entry. Interconversion between the open-gate and close-gate conformations leads to a dynamic regulation of the 20S proteasome proteolysis activity. Component of the proteasome core, a large protease complex with broad specificity involved in protein degradation. The chain is Proteasome subunit alpha from Parafrankia sp. (strain EAN1pec).